The following is a 478-amino-acid chain: Probable cytosolic Fe-S cluster assembly factor AAEL012261 (478 aa).

[4Fe-4S] cluster contacts are provided by C23, C69, C72, C75, C189, C245, C396, and C400.

This sequence belongs to the NARF family.

In terms of biological role, component of the cytosolic iron-sulfur (Fe/S) protein assembly machinery. Required for maturation of extramitochondrial Fe/S proteins. This is Probable cytosolic Fe-S cluster assembly factor AAEL012261 from Aedes aegypti (Yellowfever mosquito).